A 101-amino-acid polypeptide reads, in one-letter code: MAKLITSFLLLTILFTFVCLTMSKEAEYHPESYGPGSLKSYQCGGQCTRRCSNTKYHKPCMFFCQKCCAKCLCVPPGTYGNKQVCPCYNNWKTQQGGPKCP.

Positions 1–23 are cleaved as a signal peptide; that stretch reads MAKLITSFLLLTILFTFVCLTMS.

It belongs to the GASA family. Six disulfide bonds may be present.

It is found in the secreted. Gibberellin-regulated protein that may function in hormonal controlled steps of development such as seed germination, flowering and seed maturation. The sequence is that of Gibberellin-regulated protein 6 (GASA6) from Arabidopsis thaliana (Mouse-ear cress).